Here is a 263-residue protein sequence, read N- to C-terminus: Lens fiber major intrinsic protein (263 aa).

Over 1–9 (MWELRSASF) the chain is Cytoplasmic. Residues 10-29 (WRAIFAEFFATLFYVFFGLG) form a helical membrane-spanning segment. At 30–41 (ASLRWTPGPLHV) the chain is on the extracellular side. The helical transmembrane segment at 42-59 (LQVALAFGLALATLVQAV) threads the bilayer. The Cytoplasmic portion of the chain corresponds to 60 to 61 (GH). The discontinuously helical intramembrane region spans 62 to 77 (ISGAHVNPAVTFAFLV). Positions 68–70 (NPA) match the NPA 1 motif. The Cytoplasmic portion of the chain corresponds to 78–82 (GSQMS). The helical transmembrane segment at 83 to 106 (LLRAFCYMAAQLLGAVAGAAVLYS) threads the bilayer. Residues 107 to 127 (VTPPAVRGNLALNTLHPGVSV) are Extracellular-facing. A helical transmembrane segment spans residues 128–148 (GQATTVEIFLTLQFVLCIFAT). Residues 149–156 (YDERRNGR) lie on the Cytoplasmic side of the membrane. The helical transmembrane segment at 157–175 (LGSVALAVGFSLTLGHLFG) threads the bilayer. The Extracellular segment spans residues 176–178 (MYY). The discontinuously helical intramembrane region spans 179–193 (TGAGMNPARSFAPAI). The NPA 2 signature appears at 184 to 186 (NPA). Residues 194-200 (LTRNFTN) lie on the Extracellular side of the membrane. The helical transmembrane segment at 201 to 222 (HWVYWVGPIIGGGLGSLLYDFL) threads the bilayer. Topologically, residues 223-263 (LFPRLKSVSERLSILKGARPSDSNGQPEGTGEPVELKTQAL) are cytoplasmic. The tract at residues 227–237 (LKSVSERLSIL) is interaction with CALM. Ser-235, Ser-243, and Ser-245 each carry phosphoserine. The disordered stretch occupies residues 240–263 (ARPSDSNGQPEGTGEPVELKTQAL). Asn-246 carries the deamidated asparagine modification.

The protein belongs to the MIP/aquaporin (TC 1.A.8) family. As to quaternary structure, homotetramer; each monomer provides an independent water pore. Two homotetramers on opposing membranes can dimerize, forming a cell-cell junction. Interacts with CALM; the calcium-calmodulin/CALM complex interacts with the cytoplasmic domains of two aquaporins, leading to channel closure. Interacts with BFSP1 (via C-terminus); prevents calcium-dependent inhibition of the water channel activity. Subject to partial proteolytic cleavage in the eye lens core. Partial proteolysis promotes interactions between tetramers from adjoining membranes. In terms of processing, fatty acylated at Met-1 and Lys-238. The acyl modifications, in decreasing order of ion abundance, are: oleoyl (C18:1) &gt; palmitoyl (C16:0) &gt; stearoyl (C18:0) &gt; eicosenoyl (C20:1) &gt; dihomo-gamma-linolenoyl (C20:3) &gt; palmitoleoyl (C16:1) &gt; eicosadienoyl (C20:2).

It localises to the cell membrane. Its subcellular location is the cell junction. It carries out the reaction H2O(in) = H2O(out). With respect to regulation, the water channel activity is inhibited by calcium through calmodulin/CALM. Aquaporins form homotetrameric transmembrane channels, with each monomer independently mediating water transport across the plasma membrane along its osmotic gradient. Specifically expressed in lens fiber cells, this aquaporin is crucial for maintaining lens water homeostasis and transparency. Beyond water permeability, it also acts as a cell-to-cell adhesion molecule, forming thin junctions between lens fiber cells that are essential for maintaining the ordered structure and transparency of the lens. The chain is Lens fiber major intrinsic protein from Canis lupus familiaris (Dog).